Here is an 87-residue protein sequence, read N- to C-terminus: Cell division topological specificity factor (87 aa).

Belongs to the MinE family.

Its function is as follows. Prevents the cell division inhibition by proteins MinC and MinD at internal division sites while permitting inhibition at polar sites. This ensures cell division at the proper site by restricting the formation of a division septum at the midpoint of the long axis of the cell. This is Cell division topological specificity factor from Chelativorans sp. (strain BNC1).